A 365-amino-acid polypeptide reads, in one-letter code: Flagellar P-ring protein (365 aa).

A signal peptide spans 1-19 (MIKFLSTFMLLLVTTVVQA).

It belongs to the FlgI family. As to quaternary structure, the basal body constitutes a major portion of the flagellar organelle and consists of four rings (L,P,S, and M) mounted on a central rod.

It is found in the periplasm. The protein localises to the bacterial flagellum basal body. Assembles around the rod to form the L-ring and probably protects the motor/basal body from shearing forces during rotation. The sequence is that of Flagellar P-ring protein from Escherichia fergusonii (strain ATCC 35469 / DSM 13698 / CCUG 18766 / IAM 14443 / JCM 21226 / LMG 7866 / NBRC 102419 / NCTC 12128 / CDC 0568-73).